Reading from the N-terminus, the 363-residue chain is Aminomethyltransferase (363 aa).

This sequence belongs to the GcvT family. The glycine cleavage system is composed of four proteins: P, T, L and H.

The enzyme catalyses N(6)-[(R)-S(8)-aminomethyldihydrolipoyl]-L-lysyl-[protein] + (6S)-5,6,7,8-tetrahydrofolate = N(6)-[(R)-dihydrolipoyl]-L-lysyl-[protein] + (6R)-5,10-methylene-5,6,7,8-tetrahydrofolate + NH4(+). The glycine cleavage system catalyzes the degradation of glycine. The sequence is that of Aminomethyltransferase from Staphylococcus saprophyticus subsp. saprophyticus (strain ATCC 15305 / DSM 20229 / NCIMB 8711 / NCTC 7292 / S-41).